The following is a 190-amino-acid chain: NADH-ubiquinone oxidoreductase chain 5 (190 aa).

The next 6 membrane-spanning stretches (helical) occupy residues M1 to V21, I68 to L88, N94 to F114, F118 to L138, N146 to S166, and L167 to M187.

It belongs to the complex I subunit 5 family.

Its subcellular location is the mitochondrion inner membrane. It catalyses the reaction a ubiquinone + NADH + 5 H(+)(in) = a ubiquinol + NAD(+) + 4 H(+)(out). Its function is as follows. Core subunit of the mitochondrial membrane respiratory chain NADH dehydrogenase (Complex I) that is believed to belong to the minimal assembly required for catalysis. Complex I functions in the transfer of electrons from NADH to the respiratory chain. The immediate electron acceptor for the enzyme is believed to be ubiquinone. The protein is NADH-ubiquinone oxidoreductase chain 5 (ND5) of Arbacia lixula (Black urchin).